Reading from the N-terminus, the 316-residue chain is Ribosomal RNA small subunit methyltransferase H (316 aa).

S-adenosyl-L-methionine contacts are provided by residues 32 to 34 (AGH), aspartate 52, phenylalanine 79, aspartate 100, and glutamine 107.

It belongs to the methyltransferase superfamily. RsmH family.

It localises to the cytoplasm. It catalyses the reaction cytidine(1402) in 16S rRNA + S-adenosyl-L-methionine = N(4)-methylcytidine(1402) in 16S rRNA + S-adenosyl-L-homocysteine + H(+). Its function is as follows. Specifically methylates the N4 position of cytidine in position 1402 (C1402) of 16S rRNA. This is Ribosomal RNA small subunit methyltransferase H from Lysinibacillus sphaericus (strain C3-41).